The chain runs to 512 residues: Serine--tRNA ligase, cytoplasmic (512 aa).

M1 carries the N-acetylmethionine modification. The segment at 9–61 (RVDKGGDPALIRETQEKRFKDPGLVDQLVKADSEWRRCRFRADNLNKLKNLCS) is interaction with tRNA. S241 is subject to Phosphoserine. L-serine is bound by residues T271 and R302. ATP contacts are provided by residues 302 to 304 (RQE) and 318 to 321 (VHQF). K323 carries the N6-acetyllysine modification. E325 is an L-serine binding site. Position 391–394 (391–394 (ELVS)) interacts with ATP. N427 provides a ligand contact to L-serine. The disordered stretch occupies residues 472–512 (KPAPIDQEPSKKQKKQHEGSKKKAKEVTLENQLQNMEVTEA). Residues 479–499 (EPSKKQKKQHEGSKKKAKEVT) are compositionally biased toward basic and acidic residues. The Nuclear localization signal motif lies at 482–494 (KKQKKQHEGSKKK). The span at 500 to 512 (LENQLQNMEVTEA) shows a compositional bias: polar residues.

It belongs to the class-II aminoacyl-tRNA synthetase family. Type-1 seryl-tRNA synthetase subfamily. Homodimer. The tRNA molecule may bind across the dimer. Interacts with SIRT2. Interacts with METTL6; interaction is required for the tRNA N(3)-methylcytidine methyltransferase activity of METTL6.

It localises to the cytoplasm. The protein localises to the nucleus. It catalyses the reaction tRNA(Ser) + L-serine + ATP = L-seryl-tRNA(Ser) + AMP + diphosphate + H(+). The catalysed reaction is tRNA(Sec) + L-serine + ATP = L-seryl-tRNA(Sec) + AMP + diphosphate + H(+). The protein operates within aminoacyl-tRNA biosynthesis; selenocysteinyl-tRNA(Sec) biosynthesis; L-seryl-tRNA(Sec) from L-serine and tRNA(Sec): step 1/1. Functionally, catalyzes the attachment of serine to tRNA(Ser) in a two-step reaction: serine is first activated by ATP to form Ser-AMP and then transferred to the acceptor end of tRNA(Ser). Is probably also able to aminoacylate tRNA(Sec) with serine, to form the misacylated tRNA L-seryl-tRNA(Sec), which will be further converted into selenocysteinyl-tRNA(Sec). In the nucleus, binds to the VEGFA core promoter and prevents MYC binding and transcriptional activation by MYC. Recruits SIRT2 to the VEGFA promoter, promoting deacetylation of histone H4 at 'Lys-16' (H4K16). Thereby, inhibits the production of VEGFA and sprouting angiogenesis mediated by VEGFA. In Rattus norvegicus (Rat), this protein is Serine--tRNA ligase, cytoplasmic (Sars1).